The primary structure comprises 138 residues: MGNLARFGVSLDQDLLEPFDELCRRKSYPNRSEAIRDLIRKALVEEKWNSDAHGAGTLTLVYDHHKNDLSRRLVQIQHDDHDLIVTTLHVHLDHYNCLEVLVLKGEPKRMRALADKLIACRGVKHGTFTGTTTGEDLA.

Ni(2+) contacts are provided by H78, H89, H91, and C97.

The protein belongs to the transcriptional regulatory CopG/NikR family. The cofactor is Ni(2+).

Transcriptional regulator. The chain is Putative nickel-responsive regulator from Desulfovibrio desulfuricans (strain ATCC 27774 / DSM 6949 / MB).